The following is a 394-amino-acid chain: Probable aspartate/prephenate aminotransferase (394 aa).

G40, W126, and N176 together coordinate L-aspartate. K239 bears the N6-(pyridoxal phosphate)lysine mark. R370 lines the L-aspartate pocket.

It belongs to the class-I pyridoxal-phosphate-dependent aminotransferase family. In terms of assembly, homodimer. The cofactor is pyridoxal 5'-phosphate.

The protein resides in the cytoplasm. It carries out the reaction L-aspartate + 2-oxoglutarate = oxaloacetate + L-glutamate. It catalyses the reaction L-arogenate + oxaloacetate = prephenate + L-aspartate. Catalyzes the reversible conversion of aspartate and 2-oxoglutarate to glutamate and oxaloacetate. Can also transaminate prephenate in the presence of aspartate. This chain is Probable aspartate/prephenate aminotransferase (aspC), found in Aquifex aeolicus (strain VF5).